Reading from the N-terminus, the 409-residue chain is Failed axon connections homolog (409 aa).

The helical transmembrane segment at 68 to 88 (YLTGGALLAAAAYLLHELLVI) threads the bilayer. Residues 372–409 (DEGAENSFSRTPDTDFTGHSLFDSDVDMDDYTEHEQCK) are disordered.

This sequence belongs to the FAX family.

Its subcellular location is the membrane. In terms of biological role, may play a role in axonal development. The chain is Failed axon connections homolog (Faxc) from Rattus norvegicus (Rat).